The chain runs to 186 residues: Enhancer of split m7 protein (186 aa).

One can recognise a bHLH domain in the interval 13-68; it reads YRKVMKPLLERKRRARINKCLDELKDLMAECVAQTGDAKFEKADILEVTVQHLRKL. Positions 83 to 116 constitute an Orange domain; that stretch reads FRAGYIRAANEVSRALASLPRVDVAFGTTLMTHL. The WRPW motif signature appears at 183 to 186; it reads WRPW.

Transcription repression requires formation of a complex with a corepressor protein (Groucho). Forms homodimers.

It is found in the nucleus. In terms of biological role, participates in the control of cell fate choice by uncommitted neuroectodermal cells in the embryo. Transcriptional repressor. Binds DNA on N-box motifs: 5'-CACNAG-3'. This Drosophila melanogaster (Fruit fly) protein is Enhancer of split m7 protein.